The following is a 669-amino-acid chain: Soluble guanylate cyclase 89Db (669 aa).

His-104 is a heme binding site. A coiled-coil region spans residues 430–458; it reads QHCSKLEIMFEKEEQRSDELEKSLELADS. One can recognise a Guanylate cyclase domain in the interval 494–620; sequence SVIFIEVMNI…DTVNTASRME (127 aa).

This sequence belongs to the adenylyl cyclase class-4/guanylyl cyclase family. Heterodimer; with Gyc88E, in the presence of magnesium or manganese. Heme serves as cofactor. Expressed in embryos in a segmental pattern in the ventral nerve cord (VNC) and in the brain, beginning at stage 13 and continuing through to stage 17. Colocalized with Gyc-89Db in several peripheral neurons that innervate trachea, basiconical sensilla and the sensory cones in the posterior segments of the embryo. Expression in wandering 3rd instar larvae is most prominent in a small cluster of cells located in the anterior medial region of each brain lobe. In the VNC, expression is found in scattered cells both laterally and at the midline.

It is found in the cytoplasm. It carries out the reaction GTP = 3',5'-cyclic GMP + diphosphate. Probably not activated by nitric oxide (NO). Heterodimer exhibits some stimulation, compounds (SIN-1 and two of the NONOates) that were ineffective at stimulating Gyc-88E homodimer did stimulate the heterodimer. Functionally, heterodimers with Gyc88E are activated in response to changing oxygen concentrations, alerting flies to hypoxic environments. Under normal oxygen concentrations, oxygen binds to the heme group and results in low levels of guanylyl cyclase activity. When exposed to reduced oxygen concentrations, the oxygen dissociates from the heme group resulting in activation of the enzyme. The polypeptide is Soluble guanylate cyclase 89Db (Drosophila melanogaster (Fruit fly)).